The primary structure comprises 354 residues: MATQEEKQKALAAALGQIEKQFGKGSIMKLGDTKTLDVESISTGSLGLDVALGIGGLPMGRIVEIFGPESSGKTTLTLSVIAQAQKAGKTCAFIDAEHALDPIYAAKLGVDVKELFVSQPDNGEQALEICDALVRSGAIDVIIVDSVAALTPKAEIEGDMGDSHMGLQARLMSQALRKLTGQIKNANCLVVFINQIRMKIGVMFGNPETTTGGNALKFYSSVRLDIRRTGSVKDGENIIGNETRVKVVKNKLAAPFRQVDFQILYGEGISKAGELLELGVKHKLVEKSGAWYSYNGEKIGQGKANSMKWLNENIEKSDELEARLRAELVANPEQALMADIEQSENNTESESDFE.

Residue 67 to 74 (GPESSGKT) coordinates ATP.

The protein belongs to the RecA family.

It localises to the cytoplasm. Its function is as follows. Can catalyze the hydrolysis of ATP in the presence of single-stranded DNA, the ATP-dependent uptake of single-stranded DNA by duplex DNA, and the ATP-dependent hybridization of homologous single-stranded DNAs. It interacts with LexA causing its activation and leading to its autocatalytic cleavage. This Haemophilus influenzae (strain 86-028NP) protein is Protein RecA.